Consider the following 227-residue polypeptide: Cytochrome c oxidase subunit 2 (227 aa).

Residues 1-14 (MAHRAQVGLQDATS) are Mitochondrial intermembrane-facing. The chain crosses the membrane as a helical span at residues 15-45 (PIMEELVIFHDHALMIIFLICFLVLYALFLT). Over 46-59 (LTTKLTNTNISDAQ) the chain is Mitochondrial matrix. The helical transmembrane segment at 60 to 87 (EMETIWTTLPAIILILIALPSLRILYLT) threads the bilayer. The Mitochondrial intermembrane segment spans residues 88 to 227 (DEINDPSFTI…IFEMGPVFAL (140 aa)). Cu cation-binding residues include His161, Cys196, Glu198, Cys200, His204, and Met207. Glu198 contributes to the Mg(2+) binding site.

This sequence belongs to the cytochrome c oxidase subunit 2 family. Component of the cytochrome c oxidase (complex IV, CIV), a multisubunit enzyme composed of 14 subunits. The complex is composed of a catalytic core of 3 subunits MT-CO1, MT-CO2 and MT-CO3, encoded in the mitochondrial DNA, and 11 supernumerary subunits COX4I, COX5A, COX5B, COX6A, COX6B, COX6C, COX7A, COX7B, COX7C, COX8 and NDUFA4, which are encoded in the nuclear genome. The complex exists as a monomer or a dimer and forms supercomplexes (SCs) in the inner mitochondrial membrane with NADH-ubiquinone oxidoreductase (complex I, CI) and ubiquinol-cytochrome c oxidoreductase (cytochrome b-c1 complex, complex III, CIII), resulting in different assemblies (supercomplex SCI(1)III(2)IV(1) and megacomplex MCI(2)III(2)IV(2)). Found in a complex with TMEM177, COA6, COX18, COX20, SCO1 and SCO2. Interacts with TMEM177 in a COX20-dependent manner. Interacts with COX20. Interacts with COX16. Cu cation is required as a cofactor.

The protein localises to the mitochondrion inner membrane. It carries out the reaction 4 Fe(II)-[cytochrome c] + O2 + 8 H(+)(in) = 4 Fe(III)-[cytochrome c] + 2 H2O + 4 H(+)(out). Component of the cytochrome c oxidase, the last enzyme in the mitochondrial electron transport chain which drives oxidative phosphorylation. The respiratory chain contains 3 multisubunit complexes succinate dehydrogenase (complex II, CII), ubiquinol-cytochrome c oxidoreductase (cytochrome b-c1 complex, complex III, CIII) and cytochrome c oxidase (complex IV, CIV), that cooperate to transfer electrons derived from NADH and succinate to molecular oxygen, creating an electrochemical gradient over the inner membrane that drives transmembrane transport and the ATP synthase. Cytochrome c oxidase is the component of the respiratory chain that catalyzes the reduction of oxygen to water. Electrons originating from reduced cytochrome c in the intermembrane space (IMS) are transferred via the dinuclear copper A center (CU(A)) of subunit 2 and heme A of subunit 1 to the active site in subunit 1, a binuclear center (BNC) formed by heme A3 and copper B (CU(B)). The BNC reduces molecular oxygen to 2 water molecules using 4 electrons from cytochrome c in the IMS and 4 protons from the mitochondrial matrix. This chain is Cytochrome c oxidase subunit 2 (MT-CO2), found in Pongo pygmaeus (Bornean orangutan).